An 88-amino-acid polypeptide reads, in one-letter code: Phosphocarrier protein HPr (88 aa).

The region spanning 1-88 (MEKREFNIIA…DTMKKEGLAE (88 aa)) is the HPr domain. The active-site Pros-phosphohistidine intermediate is histidine 15. Serine 46 carries the phosphoserine; by HPrK/P modification.

It belongs to the HPr family.

It localises to the cytoplasm. With respect to regulation, phosphorylation on Ser-46 inhibits the phosphoryl transfer from enzyme I to HPr. In terms of biological role, general (non sugar-specific) component of the phosphoenolpyruvate-dependent sugar phosphotransferase system (sugar PTS). This major carbohydrate active-transport system catalyzes the phosphorylation of incoming sugar substrates concomitantly with their translocation across the cell membrane. The phosphoryl group from phosphoenolpyruvate (PEP) is transferred to the phosphoryl carrier protein HPr by enzyme I. Phospho-HPr then transfers it to the PTS EIIA domain. Functionally, P-Ser-HPr interacts with the catabolite control protein A (CcpA), forming a complex that binds to DNA at the catabolite response elements cre, operator sites preceding a large number of catabolite-regulated genes. Thus, P-Ser-HPr is a corepressor in carbon catabolite repression (CCR), a mechanism that allows bacteria to coordinate and optimize the utilization of available carbon sources. P-Ser-HPr also plays a role in inducer exclusion, in which it probably interacts with several non-PTS permeases and inhibits their transport activity. This chain is Phosphocarrier protein HPr (ptsH), found in Lacticaseibacillus casei (Lactobacillus casei).